The primary structure comprises 385 residues: Fe-S cluster assembly protein DRE2 (385 aa).

The tract at residues 1 to 177 is N-terminal SAM-like domain; that stretch reads MTSSINILLL…KKLNKNDMTI (177 aa). A linker region spans residues 178–240; it reads NVPQEIDNIT…NDLLKYNNHN (63 aa). A disordered region spans residues 200–226; that stretch reads YFSSDDENSSDGSLSDNANEEEEDDDE. The segment covering 217–226 has biased composition (acidic residues); the sequence is ANEEEEDDDE. Residues C261, C275, C278, and C280 each contribute to the [2Fe-2S] cluster site. Residues 261 to 280 are fe-S binding site A; sequence CELSLNGGKKRKKACKDCTC. [4Fe-4S] cluster-binding residues include C348, C351, C359, and C362. Short sequence motifs (cx2C motif) lie at residues 348–351 and 359–362; these read CGSC and CDGC. Positions 348-362 are fe-S binding site B; the sequence is CGSCALGDAFRCDGC.

The protein belongs to the anamorsin family. As to quaternary structure, monomer. Interacts with TAH18. Interacts with MIA40. [2Fe-2S] cluster serves as cofactor. Requires [4Fe-4S] cluster as cofactor.

The protein resides in the cytoplasm. It localises to the mitochondrion intermembrane space. In terms of biological role, component of the cytosolic iron-sulfur (Fe-S) protein assembly (CIA) machinery required for the maturation of extramitochondrial Fe-S proteins. Part of an electron transfer chain functioning in an early step of cytosolic Fe-S biogenesis, facilitating the de novo assembly of a [4Fe-4S] cluster on the scaffold complex CFD1-NBP35. Electrons are transferred to DRE2 from NADPH via the FAD- and FMN-containing protein TAH18. TAH18-DRE2 are also required for the assembly of the diferric tyrosyl radical cofactor of ribonucleotide reductase (RNR), probably by providing electrons for reduction during radical cofactor maturation in the catalytic small subunit RNR2. The chain is Fe-S cluster assembly protein DRE2 from Candida dubliniensis (strain CD36 / ATCC MYA-646 / CBS 7987 / NCPF 3949 / NRRL Y-17841) (Yeast).